Here is a 702-residue protein sequence, read N- to C-terminus: Penicillin-binding protein activator LpoA (702 aa).

An N-terminal signal peptide occupies residues Met1 to Gly26. A lipid anchor (N-palmitoyl cysteine) is attached at Cys27. Cys27 is lipidated: S-diacylglycerol cysteine. A disordered region spans residues Gly327–Pro378. A compositionally biased stretch (low complexity) spans Ala330–Pro378.

The protein belongs to the LpoA family. As to quaternary structure, interacts with PBP1a.

It localises to the cell outer membrane. In terms of biological role, regulator of peptidoglycan synthesis that is essential for the function of penicillin-binding protein 1A (PBP1a). The sequence is that of Penicillin-binding protein activator LpoA from Klebsiella pneumoniae subsp. pneumoniae (strain ATCC 700721 / MGH 78578).